The following is a 155-amino-acid chain: Glutaredoxin-related protein 5, mitochondrial (155 aa).

Residues Met-1–Ser-14 constitute a mitochondrion transit peptide. Residues Gln-42–Ser-145 enclose the Glutaredoxin domain. Position 59 (Lys-59) interacts with glutathione. Cys-67 provides a ligand contact to [2Fe-2S] cluster. Glutathione-binding positions include Arg-97–Lys-101, Ile-109, and Cys-122–Asp-123.

In terms of assembly, homodimer.

It localises to the mitochondrion. Monothiol glutaredoxin involved in mitochondrial iron-sulfur (Fe/S) cluster transfer. Receives iron-sulfur clusters from scaffold protein ISCU and mediates their transfer to apoproteins, to the 4Fe/FS cluster biosynthesis machinery, or export from mitochondrion. Required for normal hemoglobin biosynthesis. The polypeptide is Glutaredoxin-related protein 5, mitochondrial (glrx5) (Danio rerio (Zebrafish)).